The primary structure comprises 156 residues: Small ribosomal subunit protein uS7 (156 aa).

This sequence belongs to the universal ribosomal protein uS7 family. Part of the 30S ribosomal subunit. Contacts proteins S9 and S11.

Functionally, one of the primary rRNA binding proteins, it binds directly to 16S rRNA where it nucleates assembly of the head domain of the 30S subunit. Is located at the subunit interface close to the decoding center, probably blocks exit of the E-site tRNA. This chain is Small ribosomal subunit protein uS7, found in Streptococcus uberis (strain ATCC BAA-854 / 0140J).